Here is a 164-residue protein sequence, read N- to C-terminus: Phosphopantetheine adenylyltransferase (164 aa).

T9 is a binding site for substrate. Residues 9-10 and H17 each bind ATP; that span reads TF. 3 residues coordinate substrate: K41, L78, and R92. ATP-binding positions include 93–95, E103, and 128–134; these read GLR and RQAIASK.

It belongs to the bacterial CoaD family. Homohexamer. It depends on Mg(2+) as a cofactor.

The protein resides in the cytoplasm. It catalyses the reaction (R)-4'-phosphopantetheine + ATP + H(+) = 3'-dephospho-CoA + diphosphate. It functions in the pathway cofactor biosynthesis; coenzyme A biosynthesis; CoA from (R)-pantothenate: step 4/5. Functionally, reversibly transfers an adenylyl group from ATP to 4'-phosphopantetheine, yielding dephospho-CoA (dPCoA) and pyrophosphate. In Paracoccus denitrificans (strain Pd 1222), this protein is Phosphopantetheine adenylyltransferase.